The primary structure comprises 106 residues: Translation initiation factor 1A 2 (106 aa).

The interval 1–24 (MRKRREGTANNSPTPEVTRVRTPR) is disordered. Residues 18–92 (TRVRTPRKEN…SKADVIWKYT (75 aa)) form the S1-like domain.

This sequence belongs to the eIF-1A family.

Seems to be required for maximal rate of protein biosynthesis. Enhances ribosome dissociation into subunits and stabilizes the binding of the initiator Met-tRNA(I) to 40 S ribosomal subunits. This chain is Translation initiation factor 1A 2 (eIF1A2), found in Methanosarcina mazei (strain ATCC BAA-159 / DSM 3647 / Goe1 / Go1 / JCM 11833 / OCM 88) (Methanosarcina frisia).